Here is a 110-residue protein sequence, read N- to C-terminus: uncharacterized protein (110 aa).

Residues 86–110 form a disordered region; that stretch reads SEEIDEPVMKKRHRRKGSPHRAPFF. Residues 95–104 are compositionally biased toward basic residues; that stretch reads KKRHRRKGSP.

This is an uncharacterized protein from Arabidopsis thaliana (Mouse-ear cress).